Consider the following 75-residue polypeptide: U6-lycotoxin-Ls1c (75 aa).

Positions 1–21 are cleaved as a signal peptide; sequence MKLLLFTALVLVVISLIEVEA. The propeptide occupies 22–25; it reads ENER. Cystine bridges form between C27-C42, C34-C47, C41-C65, and C49-C63.

This sequence belongs to the neurotoxin 19 (CSTX) family. 06 (U6-Lctx) subfamily. As to expression, expressed by the venom gland.

The protein localises to the secreted. This chain is U6-lycotoxin-Ls1c, found in Lycosa singoriensis (Wolf spider).